We begin with the raw amino-acid sequence, 186 residues long: GMP synthase [glutamine-hydrolyzing] subunit A (186 aa).

Residues Ser2 to Tyr186 form the Glutamine amidotransferase type-1 domain. Residue Cys76 is the Nucleophile of the active site. Catalysis depends on residues His163 and Glu165.

Heterodimer composed of a glutamine amidotransferase subunit (A) and a GMP-binding subunit (B).

The catalysed reaction is XMP + L-glutamine + ATP + H2O = GMP + L-glutamate + AMP + diphosphate + 2 H(+). The protein operates within purine metabolism; GMP biosynthesis; GMP from XMP (L-Gln route): step 1/1. Catalyzes the synthesis of GMP from XMP. The sequence is that of GMP synthase [glutamine-hydrolyzing] subunit A from Methanosphaera stadtmanae (strain ATCC 43021 / DSM 3091 / JCM 11832 / MCB-3).